The chain runs to 883 residues: Phosphoenolpyruvate carboxylase (883 aa).

Active-site residues include H138 and K546.

This sequence belongs to the PEPCase type 1 family. Mg(2+) serves as cofactor.

It catalyses the reaction oxaloacetate + phosphate = phosphoenolpyruvate + hydrogencarbonate. Forms oxaloacetate, a four-carbon dicarboxylic acid source for the tricarboxylic acid cycle. The protein is Phosphoenolpyruvate carboxylase of Erwinia tasmaniensis (strain DSM 17950 / CFBP 7177 / CIP 109463 / NCPPB 4357 / Et1/99).